The sequence spans 485 residues: Amino acid permease 1 (485 aa).

Residues 1 to 15 show a composition bias toward polar residues; the sequence is MKSFNTEGHNHSTAE. The segment at 1–35 is disordered; it reads MKSFNTEGHNHSTAESGDAYTVSDPTKNVDEDGRE. Residues 1–40 lie on the Cytoplasmic side of the membrane; the sequence is MKSFNTEGHNHSTAESGDAYTVSDPTKNVDEDGREKRTGT. The next 2 helical transmembrane spans lie at 41 to 61 and 62 to 82; these read WLTA…LSLA and WAIA…FSFI. Over 83–129 the chain is Cytoplasmic; it reads TYFTSTMLADCYRAPDPVTGKRNYTYMDVVRSYLGGRKVQLCGVAQY. A helical membrane pass occupies residues 130-150; that stretch reads GNLIGVTVGYTITASISLVAV. The Extracellular segment spans residues 151–166; sequence GKSNCFHDKGHTADCT. Residues 167–187 traverse the membrane as a helical segment; that stretch reads ISNYPYMAVFGIIQVILSQIP. The Cytoplasmic segment spans residues 188–194; sequence NFHKLSF. The chain crosses the membrane as a helical span at residues 195 to 215; the sequence is LSIMAAVMSFTYATIGIGLAI. The Extracellular portion of the chain corresponds to 216–245; the sequence is ATVAGGKVGKTSMTGTAVGVDVTAAQKIWR. A helical transmembrane segment spans residues 246–266; the sequence is SFQAVGDIAFAYAYATVLIEI. Over 267-285 the chain is Cytoplasmic; sequence QDTLRSSPAENKAMKRASL. Residues 286–306 traverse the membrane as a helical segment; it reads VGVSTTTFFYILCGCIGYAAF. The Extracellular portion of the chain corresponds to 307-318; the sequence is GNNAPGDFLTDF. A helical membrane pass occupies residues 319–339; the sequence is GFFEPFWLIDFANACIAVHLI. Topologically, residues 340-394 are cytoplasmic; sequence GAYQVFAQPIFQFVEKKCNRNYPDNKFITSEYSVNVPFLGKFNISLFRLVWRTAY. The next 2 helical transmembrane spans lie at 395–415 and 416–436; these read VVIT…LGLI and GAAS…IAQT. Topologically, residues 437–450 are cytoplasmic; sequence KIKKYSARWIALKT. Residues 451–471 form a helical membrane-spanning segment; sequence MCYVCLIVSLLAAAGSIAGLI. The Extracellular portion of the chain corresponds to 472 to 485; sequence SSVKTYKPFRTMHE.

It belongs to the amino acid/polyamine transporter 2 family. Amino acid/auxin permease (AAAP) (TC 2.A.18.2) subfamily. Highly expressed in developing pods. Found in the endosperm and in the storage parenchyma and the outer epidermis cells of the developing embryo. Lower levels of expression in flowers, in the vascular system of the cotyledon and in the root epidermal cells, including root hairs and throughout the root tip.

It is found in the cell membrane. Inhibited by carbonylcyanide m-chlorophenylhydrazone and diethylpyrocarbonate (DEPC). Its function is as follows. Amino acid-proton symporter. Stereospecific transporter with a broad specificity for histidine, glutamate and neutral amino acids. Reduced affinities for asparagine and valine. Involved in amino acid uptake from the apoplastic cavity into the embryo cells for storage protein accumulation and in root amino acid uptake. The chain is Amino acid permease 1 (AAP1) from Arabidopsis thaliana (Mouse-ear cress).